The sequence spans 497 residues: Uridine 5'-monophosphate synthase (497 aa).

Positions 8–226 (TRNGALKRNL…KLEINSELEN (219 aa)) are OPRTase. The tract at residues 227–232 (LSSLPY) is domain linker. An OMPdecase region spans residues 233-496 (VENVRTPLAE…WDALTRSDDS (264 aa)). UMP contacts are provided by residues D271 and 293–295 (KLH). K293 provides a ligand contact to orotidine 5'-phosphate. Residues D324, K326, and D329 each act as for OMPdecase activity in the active site. Orotidine 5'-phosphate is bound by residues K326, D329, T333, S387, 446–448 (QQW), and 466–467 (GR). UMP is bound by residues D329, T333, S387, 446-448 (QQW), and 466-467 (GR).

In the N-terminal section; belongs to the purine/pyrimidine phosphoribosyltransferase family. This sequence in the C-terminal section; belongs to the OMP decarboxylase family. As to expression, expressed in intestine and in neurons near the nerve ring and rectum.

Its subcellular location is the cytoplasm. It catalyses the reaction orotidine 5'-phosphate + diphosphate = orotate + 5-phospho-alpha-D-ribose 1-diphosphate. The enzyme catalyses orotidine 5'-phosphate + H(+) = UMP + CO2. It functions in the pathway pyrimidine metabolism; UMP biosynthesis via de novo pathway; UMP from orotate: step 1/2. The protein operates within pyrimidine metabolism; UMP biosynthesis via de novo pathway; UMP from orotate: step 2/2. Functionally, bifunctional enzyme which catalyzes the formation of UMP from orotate in the de novo pathway of pyrimidine biosynthesis. May also form UMP from uracil. Regulates the size of gut granules during embryonic development. Involved in resistance to DNA damaging agents including UV-C and X-ray radiation. In Caenorhabditis elegans, this protein is Uridine 5'-monophosphate synthase.